The primary structure comprises 498 residues: Putative antiporter subunit mnhD2 (498 aa).

A run of 14 helical transmembrane segments spans residues 2–22 (LSNL…ILVF), 32–52 (YLYL…LIYV), 78–98 (LSLI…AYGF), 108–128 (YHLP…FLTS), 130–150 (LFNL…LITL), 161–181 (IIYV…IGLL), 209–229 (ISLI…FMWL), 240–260 (LAAL…IRFF), 271–291 (IHPL…IGVI), 308–328 (IGFI…GAIF), 330–350 (LVND…LVYI), 369–389 (FGVA…FSGF), 403–423 (GNYI…YSLF), and 451–471 (ILSI…VVLN).

It belongs to the CPA3 antiporters (TC 2.A.63) subunit D family. In terms of assembly, may form a heterooligomeric complex that consists of seven subunits: mnhA2, mnhB2, mnhC2, mnhD2, mnhE2, mnhF2 and mnhG2.

It localises to the cell membrane. In Staphylococcus aureus (strain JH1), this protein is Putative antiporter subunit mnhD2 (mnhD2).